Consider the following 205-residue polypeptide: tRNA (guanine-N(7)-)-methyltransferase (205 aa).

S-adenosyl-L-methionine contacts are provided by glutamate 36, glutamate 61, aspartate 88, and aspartate 109. The active site involves aspartate 109. Lysine 113 is a substrate binding site. Residues 115–120 (RHEKRR) form an interaction with RNA region. Residues aspartate 145 and 183–186 (TGYE) contribute to the substrate site.

The protein belongs to the class I-like SAM-binding methyltransferase superfamily. TrmB family.

It carries out the reaction guanosine(46) in tRNA + S-adenosyl-L-methionine = N(7)-methylguanosine(46) in tRNA + S-adenosyl-L-homocysteine. It participates in tRNA modification; N(7)-methylguanine-tRNA biosynthesis. Its function is as follows. Catalyzes the formation of N(7)-methylguanine at position 46 (m7G46) in tRNA. In Mycoplasmopsis agalactiae (strain NCTC 10123 / CIP 59.7 / PG2) (Mycoplasma agalactiae), this protein is tRNA (guanine-N(7)-)-methyltransferase.